The following is a 564-amino-acid chain: Transmembrane anterior posterior transformation protein 1 (564 aa).

Over residues 1-10 (MAGVCDAAAP) the composition is skewed to low complexity. Residues 1–55 (MAGVCDAAAPGEGGGGGADGPERTGRGEAEQPGGGGHGPAPQHTETLGFYESDRR) form a disordered region. Position 2 is an N-acetylalanine (A2). Residues 20 to 29 (GPERTGRGEA) show a composition bias toward basic and acidic residues. 6 consecutive transmembrane segments (helical) span residues 108–128 (LMFF…TLLP), 154–176 (PAQV…MHYV), 233–253 (IGVI…AILI), 332–352 (LWVL…VDIV), 400–420 (GFIP…SIKV), and 429–449 (VILF…VLLG). The disordered stretch occupies residues 464–546 (LFNPPPASTP…ENSELKHRSS (83 aa)). Residues 473–489 (PGKPSSKSQSKGKPSQG) are compositionally biased toward low complexity. Polar residues-rich tracts occupy residues 490-505 (LSTE…SQPG) and 516-525 (VTSNSDQFLT). At S520 the chain carries Phosphoserine. Phosphothreonine is present on T526. Basic and acidic residues predominate over residues 532–546 (KDITQENSELKHRSS).

Belongs to the TAPT1 family. As to expression, ubiquitous. Expressed throughout embryo.

The protein resides in the cytoplasm. It is found in the cytoskeleton. Its subcellular location is the microtubule organizing center. The protein localises to the centrosome. It localises to the cilium basal body. The protein resides in the membrane. Functionally, plays a role in primary cilia formation. May act as a downstream effector of HOXC8 possibly by transducing or transmitting extracellular information required for axial skeletal patterning during development. May be involved in cartilage and bone development. May play a role in the differentiation of cranial neural crest cells. The polypeptide is Transmembrane anterior posterior transformation protein 1 (Tapt1) (Mus musculus (Mouse)).